The primary structure comprises 531 residues: UDP-glucuronosyltransferase 1A3 (531 aa).

The signal sequence occupies residues 1 to 25 (MGIQGFLQKLSGLLLLLCALPWAEG). N-linked (GlcNAc...) asparagine glycosylation is found at N116, N139, N293, and N431. A helical transmembrane segment spans residues 489–505 (VIGFLLAIVLTVVFIVY).

The protein belongs to the UDP-glycosyltransferase family. As to quaternary structure, homodimers. Homooligomer. Interacts with UGT1A1, UGT1A4, UGT1A6, UGT1A7, UGT1A8, UGT1A9 and UGT1A10 to form heterodimers.

Its subcellular location is the endoplasmic reticulum membrane. It carries out the reaction glucuronate acceptor + UDP-alpha-D-glucuronate = acceptor beta-D-glucuronoside + UDP + H(+). The enzyme catalyses 17beta-estradiol + UDP-alpha-D-glucuronate = 17beta-estradiol 3-O-(beta-D-glucuronate) + UDP + H(+). The catalysed reaction is 17beta-estradiol + UDP-alpha-D-glucuronate = 17beta-estradiol 17-O-(beta-D-glucuronate) + UDP + H(+). It catalyses the reaction 17alpha-estradiol + UDP-alpha-D-glucuronate = 17alpha-estradiol 3-O-(beta-D-glucuronate) + UDP + H(+). It carries out the reaction estrone + UDP-alpha-D-glucuronate = estrone 3-O-(beta-D-glucuronate) + UDP + H(+). The enzyme catalyses chenodeoxycholate + UDP-alpha-D-glucuronate = chenodeoxycholoyl-24-O-(beta-D-glucuronate) + UDP. The catalysed reaction is deoxycholate + UDP-alpha-D-glucuronate = deoxycholoyl-24-O-(beta-D-glucuronate) + UDP. It catalyses the reaction lithocholate + UDP-alpha-D-glucuronate = lithocholoyl-24-O-(beta-D-glucuronate) + UDP. It carries out the reaction hyodeoxycholate + UDP-alpha-D-glucuronate = hyodeoxycholoyl-24-O-(beta-D-glucuronate) + UDP. The enzyme catalyses hyocholate + UDP-alpha-D-glucuronate = hyocholoyl-24-O-(beta-D-glucuronate) + UDP. The catalysed reaction is calcidiol + UDP-alpha-D-glucuronate = calcidiol 25-O-(beta-D-glucuronide) + UDP + H(+). It catalyses the reaction losartan + UDP-alpha-D-glucuronate = losartan-2-N-beta-D-glucuronide + UDP. It carries out the reaction candesartan + UDP-alpha-D-glucuronate = candesartan-2-N-beta-D-glucuronide + UDP. The enzyme catalyses zolasartan + UDP-alpha-D-glucuronate = zolarsartan-2-N-beta-D-glucuronide + UDP. The catalysed reaction is (E)-ferulate + UDP-alpha-D-glucuronate = (E)-4-O-(beta-D-glucuronosyl)-ferulate + UDP + H(+). It catalyses the reaction (E)-ferulate + UDP-alpha-D-glucuronate = (E)-ferulic acid beta-D-glucuronate ester + UDP. Functionally, UDP-glucuronosyltransferase (UGT) that catalyzes phase II biotransformation reactions in which lipophilic substrates are conjugated with glucuronic acid to increase the metabolite's water solubility, thereby facilitating excretion into either the urine or bile. Essential for the elimination and detoxification of drugs, xenobiotics and endogenous compounds. Catalyzes the glucuronidation of endogenous estrogen hormones such as estradiol and estrone. Contributes to bile acid (BA) detoxification by catalyzing the glucuronidation of BA substrates, which are natural detergents for dietary lipids absorption. Involved in the glucuronidation of calcidiol, which is the major circulating form of vitamin D3, essential for the regulation of calcium and phosphate homeostasis. Involved in the glucuronidation of the phytochemical ferulic acid at the phenolic or the carboxylic acid group. Involved in the glucuronidation of the AGTR1 angiotensin receptor antagonists losartan, candesartan and zolarsartan, which can inhibit the effect of angiotensin II. The chain is UDP-glucuronosyltransferase 1A3 from Rattus norvegicus (Rat).